Here is a 214-residue protein sequence, read N- to C-terminus: ATP phosphoribosyltransferase (214 aa).

The protein belongs to the ATP phosphoribosyltransferase family. Short subfamily. As to quaternary structure, heteromultimer composed of HisG and HisZ subunits.

It is found in the cytoplasm. It catalyses the reaction 1-(5-phospho-beta-D-ribosyl)-ATP + diphosphate = 5-phospho-alpha-D-ribose 1-diphosphate + ATP. Its pathway is amino-acid biosynthesis; L-histidine biosynthesis; L-histidine from 5-phospho-alpha-D-ribose 1-diphosphate: step 1/9. Catalyzes the condensation of ATP and 5-phosphoribose 1-diphosphate to form N'-(5'-phosphoribosyl)-ATP (PR-ATP). Has a crucial role in the pathway because the rate of histidine biosynthesis seems to be controlled primarily by regulation of HisG enzymatic activity. The sequence is that of ATP phosphoribosyltransferase (hisG) from Nostoc sp. (strain PCC 7120 / SAG 25.82 / UTEX 2576).